We begin with the raw amino-acid sequence, 184 residues long: Large ribosomal subunit protein uL5c (184 aa).

Belongs to the universal ribosomal protein uL5 family. As to quaternary structure, part of the 50S ribosomal subunit; contacts the 5S rRNA.

Its subcellular location is the plastid. It localises to the chloroplast. Its function is as follows. Binds 5S rRNA, forms part of the central protuberance of the 50S subunit. In Mesostigma viride (Green alga), this protein is Large ribosomal subunit protein uL5c (rpl5).